The primary structure comprises 85 residues: MAHKKAAGSSRNGRDSNPKMLGVKIFGGQAIVAGNIIVRQRGTEFHAGEGVGMGRDHTLFALNDGVVKFATKGKFNRRYVMVESA.

The segment at 1-20 is disordered; it reads MAHKKAAGSSRNGRDSNPKM.

The protein belongs to the bacterial ribosomal protein bL27 family.

The sequence is that of Large ribosomal subunit protein bL27 from Psychrobacter arcticus (strain DSM 17307 / VKM B-2377 / 273-4).